The sequence spans 381 residues: Succinyl-diaminopimelate desuccinylase (381 aa).

Histidine 68 is a binding site for Zn(2+). The active site involves aspartate 70. Aspartate 101 provides a ligand contact to Zn(2+). Glutamate 135 functions as the Proton acceptor in the catalytic mechanism. Residues glutamate 136, glutamate 164, and histidine 350 each contribute to the Zn(2+) site.

It belongs to the peptidase M20A family. DapE subfamily. As to quaternary structure, homodimer. The cofactor is Zn(2+). Co(2+) is required as a cofactor.

It carries out the reaction N-succinyl-(2S,6S)-2,6-diaminopimelate + H2O = (2S,6S)-2,6-diaminopimelate + succinate. Its pathway is amino-acid biosynthesis; L-lysine biosynthesis via DAP pathway; LL-2,6-diaminopimelate from (S)-tetrahydrodipicolinate (succinylase route): step 3/3. Functionally, catalyzes the hydrolysis of N-succinyl-L,L-diaminopimelic acid (SDAP), forming succinate and LL-2,6-diaminopimelate (DAP), an intermediate involved in the bacterial biosynthesis of lysine and meso-diaminopimelic acid, an essential component of bacterial cell walls. This Neisseria meningitidis serogroup C (strain 053442) protein is Succinyl-diaminopimelate desuccinylase.